Reading from the N-terminus, the 40-residue chain is Photosystem II reaction center protein J (40 aa).

Residues 8–28 traverse the membrane as a helical segment; it reads IPLWIIGTVTGILVIGLIGIF.

The protein belongs to the PsbJ family. As to quaternary structure, PSII is composed of 1 copy each of membrane proteins PsbA, PsbB, PsbC, PsbD, PsbE, PsbF, PsbH, PsbI, PsbJ, PsbK, PsbL, PsbM, PsbT, PsbX, PsbY, PsbZ, Psb30/Ycf12, at least 3 peripheral proteins of the oxygen-evolving complex and a large number of cofactors. It forms dimeric complexes.

The protein localises to the plastid. Its subcellular location is the chloroplast thylakoid membrane. One of the components of the core complex of photosystem II (PSII). PSII is a light-driven water:plastoquinone oxidoreductase that uses light energy to abstract electrons from H(2)O, generating O(2) and a proton gradient subsequently used for ATP formation. It consists of a core antenna complex that captures photons, and an electron transfer chain that converts photonic excitation into a charge separation. The sequence is that of Photosystem II reaction center protein J from Eucalyptus globulus subsp. globulus (Tasmanian blue gum).